A 71-amino-acid polypeptide reads, in one-letter code: Small ribosomal subunit protein bS18 (71 aa).

Belongs to the bacterial ribosomal protein bS18 family. In terms of assembly, part of the 30S ribosomal subunit. Forms a tight heterodimer with protein bS6.

Functionally, binds as a heterodimer with protein bS6 to the central domain of the 16S rRNA, where it helps stabilize the platform of the 30S subunit. The sequence is that of Small ribosomal subunit protein bS18 from Thermosynechococcus vestitus (strain NIES-2133 / IAM M-273 / BP-1).